The following is a 1070-amino-acid chain: DNA-directed RNA polymerase subunit beta (1070 aa).

The protein belongs to the RNA polymerase beta chain family. In plastids the minimal PEP RNA polymerase catalytic core is composed of four subunits: alpha, beta, beta', and beta''. When a (nuclear-encoded) sigma factor is associated with the core the holoenzyme is formed, which can initiate transcription.

The protein resides in the plastid. It is found in the chloroplast. It carries out the reaction RNA(n) + a ribonucleoside 5'-triphosphate = RNA(n+1) + diphosphate. DNA-dependent RNA polymerase catalyzes the transcription of DNA into RNA using the four ribonucleoside triphosphates as substrates. The protein is DNA-directed RNA polymerase subunit beta of Nicotiana tomentosiformis (Tobacco).